Consider the following 237-residue polypeptide: Purine nucleoside phosphorylase DeoD-type (237 aa).

Histidine 4 provides a ligand contact to a purine D-ribonucleoside. Phosphate-binding positions include glycine 20, arginine 24, arginine 43, and 87–90; that span reads RVGT. A purine D-ribonucleoside is bound by residues 179–181 and 203–204; these read EME and SD. Aspartate 204 serves as the catalytic Proton donor.

This sequence belongs to the PNP/UDP phosphorylase family. In terms of assembly, homohexamer; trimer of homodimers.

It catalyses the reaction a purine D-ribonucleoside + phosphate = a purine nucleobase + alpha-D-ribose 1-phosphate. It carries out the reaction a purine 2'-deoxy-D-ribonucleoside + phosphate = a purine nucleobase + 2-deoxy-alpha-D-ribose 1-phosphate. Catalyzes the reversible phosphorolytic breakdown of the N-glycosidic bond in the beta-(deoxy)ribonucleoside molecules, with the formation of the corresponding free purine bases and pentose-1-phosphate. The sequence is that of Purine nucleoside phosphorylase DeoD-type from Exiguobacterium sp. (strain ATCC BAA-1283 / AT1b).